We begin with the raw amino-acid sequence, 409 residues long: LIM/homeobox protein ttx-3 (409 aa).

2 LIM zinc-binding domains span residues Asn108 to Lys169 and Cys171 to Thr232. Disordered regions lie at residues Ala245 to Phe299 and Met372 to Leu409. The segment covering Val247–Gln267 has biased composition (pro residues). Positions Ser292–Leu351 form a DNA-binding region, homeobox. Positions Gly382–Leu409 are enriched in polar residues.

In terms of tissue distribution, expressed in the AIA, AIN and AIY interneurons, and in the NSM neurons. Expressed also in ADL and ASI sensory neurons in 60-70% of L2 larvae. Expression is also detected in head muscles of embryos and some early larvae but not late larvae or adults.

The protein localises to the nucleus. The protein resides in the perikaryon. It is found in the cell projection. It localises to the axon. Functionally, transcription factor. Binds to a sequence motif, 5'-TTATTGGCTTCGTTAA-3', which may be involved in AIY interneuron function, in the regulatory elements of target genes; binding is more efficient, in vitro, together with homeobox protein ceh-10. Required for specification of the AIA and AIY interneurons and the NSM neurons. Positively regulates the expression of a number of genes including ceh-10, ceh-23, kal-1, hen-1, ser-2, unc-17 and sra-11 in AIY neurons, and cat-4, flp-4, bas-1, ptps-1 and mgl-1 in NSM neurons. In concert with WNT/beta-catenin signaling, initiates expression of homeobox ceh-10 in AIY, but not in the sister cells, SMDD motor neurons. Also acts in an autoregulatory feedback loop to maintain its own expression. Plays a role in the thermotactic response, olfactory imprinting, regulation of longevity, control of dauer formation and axon outgrowth and pathfinding. Not required for normal chemosensory behavior. This Caenorhabditis elegans protein is LIM/homeobox protein ttx-3.